The sequence spans 309 residues: Ubiquitin domain-containing protein UBFD1 (309 aa).

A disordered region spans residues 1–80; the sequence is MAAAGAPDGM…VSNGEDAGGG (80 aa). The span at 9 to 19 shows a compositional bias: acidic residues; that stretch reads GMEEPGMDTEA. Positions 35 to 57 are enriched in low complexity; that stretch reads EAEAAAGAAAEDSGAARGSLQPA. The region spanning 84–159 is the Ubiquitin-like domain; that stretch reads ELVDLKIIWN…IMVVGSTIND (76 aa). The interval 171–204 is disordered; sequence QQDAKAEENKKEPLCRQKQHRKVLDKGKPEDVMP. Composition is skewed to basic and acidic residues over residues 174–185 and 192–201; these read AKAEENKKEPLC and KVLDKGKPED.

Binds polyubiquitin.

May play a role as NF-kappa-B regulator. The sequence is that of Ubiquitin domain-containing protein UBFD1 (UBFD1) from Homo sapiens (Human).